The sequence spans 204 residues: LexA repressor (204 aa).

The segment at residues 29–49 (VREIGDAVGLMSSSTVHGHLQ) is a DNA-binding region (H-T-H motif). Catalysis depends on for autocatalytic cleavage activity residues S127 and K164.

It belongs to the peptidase S24 family. In terms of assembly, homodimer.

The enzyme catalyses Hydrolysis of Ala-|-Gly bond in repressor LexA.. In terms of biological role, represses a number of genes involved in the response to DNA damage (SOS response), including recA and lexA. In the presence of single-stranded DNA, RecA interacts with LexA causing an autocatalytic cleavage which disrupts the DNA-binding part of LexA, leading to derepression of the SOS regulon and eventually DNA repair. This is LexA repressor from Desulfitobacterium hafniense (strain DSM 10664 / DCB-2).